The primary structure comprises 122 residues: Glucagon-2 (122 aa).

The signal sequence occupies residues 1-21 (MTSLHSLAGLLLLMIIQSSWQ). 2 propeptides span residues 83-86 (NGLF) and Glu-122.

This sequence belongs to the glucagon family.

It is found in the secreted. Its function is as follows. Promotes hydrolysis of glycogen and lipids, and raises the blood sugar level. This chain is Glucagon-2 (gcg2), found in Lophius americanus (American angler).